Reading from the N-terminus, the 343-residue chain is ATP-dependent 6-phosphofructokinase (343 aa).

Residues Gly10, 73-74 (RV), and 103-106 (GEGT) contribute to the ATP site. Glu104 serves as a coordination point for Mg(2+). Substrate-binding positions include 126–128 (TID), Arg163, 170–172 (MGR), Glu223, Arg267, and 273–276 (HIQR). Catalysis depends on Asp128, which acts as the Proton acceptor.

This sequence belongs to the phosphofructokinase type A (PFKA) family. Mixed-substrate PFK group III subfamily. Homodimer or homotetramer. Requires Mg(2+) as cofactor.

It is found in the cytoplasm. It carries out the reaction beta-D-fructose 6-phosphate + ATP = beta-D-fructose 1,6-bisphosphate + ADP + H(+). It catalyses the reaction D-tagatofuranose 6-phosphate + ATP = D-tagatofuranose 1,6-bisphosphate + ADP + H(+). It participates in carbohydrate degradation; glycolysis; D-glyceraldehyde 3-phosphate and glycerone phosphate from D-glucose: step 3/4. Functionally, catalyzes the phosphorylation of D-fructose 6-phosphate to fructose 1,6-bisphosphate by ATP, the first committing step of glycolysis. Can also catalyze the phosphorylation of tagatose-6-phosphate. This Mycobacterium tuberculosis (strain CDC 1551 / Oshkosh) protein is ATP-dependent 6-phosphofructokinase.